We begin with the raw amino-acid sequence, 256 residues long: MVKSHIGSWILVLFVAMWSDVGLCKKRPKPGGGWNTGGSRYPGQGSPGGNRYPPQGGGGWGQPHGGGWGQPHGGGWGQPHGGGWGQPHGGGGWGQGGSHSQWNKPSKPKTNMKHMAGAAAAGAVVGGLGGYMLGSAMSRPLIHFGNDYEDRYYRENMYRYPNQVYYRPVDQYSNQNNFVHDCVNITVKQHTVTTTTKGENFTETDMKIMERVVEQMCVTQYQKESEAYYQRRASAILFSSPPVILLISFLIFLIVG.

Positions 1–24 (MVKSHIGSWILVLFVAMWSDVGLC) are cleaved as a signal peptide. The interval 25–41 (KKRPKPGGGWNTGGSRY) is interaction with ADGRG6. Residues 25–233 (KKRPKPGGGW…ESEAYYQRRA (209 aa)) form an interaction with GRB2, ERI3 and SYN1 region. The interval 28–110 (PKPGGGWNTG…QWNKPSKPKT (83 aa)) is disordered. 5 consecutive repeat copies span residues 54–62 (PQGGGGWGQ), 63–70 (PHGGGWGQ), 71–78 (PHGGGWGQ), 79–86 (PHGGGWGQ), and 87–95 (PHGGGGWGQ). The tract at residues 54–95 (PQGGGGWGQPHGGGWGQPHGGGWGQPHGGGWGQPHGGGGWGQ) is 5 X 8 AA tandem repeats of P-H-G-G-G-W-G-Q. The span at 55-97 (QGGGGWGQPHGGGWGQPHGGGWGQPHGGGWGQPHGGGGWGQGG) shows a compositional bias: gly residues. Residues His-64, Gly-65, Gly-66, His-72, Gly-73, Gly-74, His-80, Gly-81, Gly-82, His-88, Gly-90, and Gly-91 each contribute to the Cu(2+) site. A disulfide bridge connects residues Cys-182 and Cys-217. Asn-184 and Asn-200 each carry an N-linked (GlcNAc...) asparagine glycan. The GPI-anchor amidated alanine moiety is linked to residue Ala-233. Residues 234–256 (SAILFSSPPVILLISFLIFLIVG) constitute a propeptide, removed in mature form.

It belongs to the prion family. As to quaternary structure, monomer and homodimer. Has a tendency to aggregate into amyloid fibrils containing a cross-beta spine, formed by a steric zipper of superposed beta-strands. Soluble oligomers may represent an intermediate stage on the path to fibril formation. Copper binding may promote oligomerization. Interacts with GRB2, APP, ERI3/PRNPIP and SYN1. Mislocalized cytosolically exposed PrP interacts with MGRN1; this interaction alters MGRN1 subcellular location and causes lysosomal enlargement. Interacts with APP. Interacts with KIAA1191. Interacts with ADGRG6.

It is found in the cell membrane. The protein resides in the golgi apparatus. Its function is as follows. Its primary physiological function is unclear. May play a role in neuronal development and synaptic plasticity. May be required for neuronal myelin sheath maintenance. May promote myelin homeostasis through acting as an agonist for ADGRG6 receptor. May play a role in iron uptake and iron homeostasis. Soluble oligomers are toxic to cultured neuroblastoma cells and induce apoptosis (in vitro). Association with GPC1 (via its heparan sulfate chains) targets PRNP to lipid rafts. Also provides Cu(2+) or Zn(2+) for the ascorbate-mediated GPC1 deaminase degradation of its heparan sulfate side chains. This chain is Major prion protein (PRNP), found in Felis catus (Cat).